A 425-amino-acid polypeptide reads, in one-letter code: Phosphoribosylamine--glycine ligase (425 aa).

The ATP-grasp domain maps to Lys109–Gln315. Ile135–Ser195 is an ATP binding site. Residues Glu285 and Asn287 each contribute to the Mg(2+) site.

Belongs to the GARS family. Mg(2+) is required as a cofactor. Requires Mn(2+) as cofactor.

The catalysed reaction is 5-phospho-beta-D-ribosylamine + glycine + ATP = N(1)-(5-phospho-beta-D-ribosyl)glycinamide + ADP + phosphate + H(+). Its pathway is purine metabolism; IMP biosynthesis via de novo pathway; N(1)-(5-phospho-D-ribosyl)glycinamide from 5-phospho-alpha-D-ribose 1-diphosphate: step 2/2. The protein is Phosphoribosylamine--glycine ligase of Nostoc sp. (strain PCC 7120 / SAG 25.82 / UTEX 2576).